The sequence spans 544 residues: Inosine-5'-monophosphate dehydrogenase (544 aa).

CBS domains follow at residues 132 to 192 (FITD…PIKS) and 194 to 250 (MTTE…PYAS). Residues 288 to 290 (DSS) and 338 to 340 (GMG) contribute to the NAD(+) site. K(+) is bound by residues G340 and G342. Position 343 (S343) interacts with IMP. Residue C345 coordinates K(+). C345 (thioimidate intermediate) is an active-site residue. IMP-binding positions include 378-380 (DGG), 401-402 (GG), and 425-429 (YRGMG). Residue R458 is the Proton acceptor of the active site. Residue Q470 participates in IMP binding. K(+) is bound by residues E529, G530, and G531.

The protein belongs to the IMPDH/GMPR family. In terms of assembly, homotetramer. K(+) serves as cofactor.

It localises to the cytoplasm. The enzyme catalyses IMP + NAD(+) + H2O = XMP + NADH + H(+). It participates in purine metabolism; XMP biosynthesis via de novo pathway; XMP from IMP: step 1/1. Its activity is regulated as follows. Mycophenolic acid (MPA) is a non-competitive inhibitor that prevents formation of the closed enzyme conformation by binding to the same site as the amobile flap. In contrast, mizoribine monophosphate (MZP) is a competitive inhibitor that induces the closed conformation. MPA is a potent inhibitor of mammalian IMPDHs but a poor inhibitor of the bacterial enzymes. MZP is a more potent inhibitor of bacterial IMPDH. Its function is as follows. Catalyzes the conversion of inosine 5'-phosphate (IMP) to xanthosine 5'-phosphate (XMP), the first committed and rate-limiting step in the de novo synthesis of guanine nucleotides, and therefore plays an important role in the regulation of cell growth. The chain is Inosine-5'-monophosphate dehydrogenase from Cryptococcus neoformans var. neoformans serotype D (strain JEC21 / ATCC MYA-565) (Filobasidiella neoformans).